The chain runs to 721 residues: Penicillin-binding protein activator LpoA (721 aa).

The N-terminal stretch at 1 to 26 (MVPLTFLRTKASRSLPIMLAALIFAG) is a signal peptide. Cys27 carries the N-palmitoyl cysteine lipid modification. The S-diacylglycerol cysteine moiety is linked to residue Cys27. A compositionally biased stretch (polar residues) spans 316–330 (TSDLTSAQAPAQGTM). The segment at 316-393 (TSDLTSAQAP…PAAQPQAVAA (78 aa)) is disordered. The span at 331-393 (QNPVTAPTTP…PAAQPQAVAA (63 aa)) shows a compositional bias: low complexity.

This sequence belongs to the LpoA family. In terms of assembly, interacts with PBP1a.

The protein localises to the cell outer membrane. Its function is as follows. Regulator of peptidoglycan synthesis that is essential for the function of penicillin-binding protein 1A (PBP1a). This Enterobacter sp. (strain 638) protein is Penicillin-binding protein activator LpoA.